Here is a 201-residue protein sequence, read N- to C-terminus: MELQAGARLLLLLGVMCYGHAQIQVHVEPRYASIVDVTNGGTWGDWAWPEMCPDGYFASGFSVKVEPPQGIPGDDTALNGIRLHCTRGNSQKNTHVVESQSGSWGSWSEPLWCPGTSFLVAFCLRVEPFTFPGDNTGVNNVRFRCSDGVELEGPGLNWGDYGEWSNSCPKGVCGLQTKIQKPRGLRDDTALNDIRIFCCAS.

The first 21 residues, 1–21 (MELQAGARLLLLLGVMCYGHA), serve as a signal peptide directing secretion. 4 cysteine pairs are disulfide-bonded: Cys52-Cys85, Cys113-Cys145, Cys168-Cys198, and Cys173-Cys199.

This sequence belongs to the VMO1 family.

It localises to the secreted. The chain is Vitelline membrane outer layer protein 1 homolog (Vmo1) from Mus musculus (Mouse).